The chain runs to 504 residues: Sodium/proline symporter (504 aa).

13 consecutive transmembrane segments (helical) span residues 8-28 (LITF…AYYY), 50-70 (SAGA…AVYL), 73-93 (LVEG…WLLV), 127-147 (LVSA…GVVA), 163-183 (ALWY…FLAV), 189-209 (IQAT…LLSF), 240-260 (LGLL…HILA), 281-301 (WMVL…PYFF), 324-344 (LLFN…AVMS), 374-394 (ELVW…IWIA), 405-425 (VEFA…FSLF), 434-454 (AMAG…VVPA), and 461-481 (VYEM…ISLL).

The protein belongs to the sodium:solute symporter (SSF) (TC 2.A.21) family.

Its subcellular location is the cell inner membrane. The catalysed reaction is L-proline(in) + Na(+)(in) = L-proline(out) + Na(+)(out). Its function is as follows. Catalyzes the sodium-dependent uptake of extracellular L-proline. The chain is Sodium/proline symporter (putP) from Haemophilus influenzae (strain ATCC 51907 / DSM 11121 / KW20 / Rd).